The chain runs to 329 residues: MAAPPRKVFVWEDGTPMRFYIRPGMAKLRLAPLLLAGGAGLCRVQEPGAVHLVQPGEPAPDGAVSTDYVVACVESQRRLPLDLYRHSGPAPLAASPRGRLPFTEAEDAALLRAVRERSGAPRVSGTALWKELECTGLTRHSWQAMRDRYLRHLRPLHRESQQTEEAAAPMGIFEAANREFESSESGSDTSDTPDELPLQNGEGTFPLEAASGLQTGLDDCALPAAQGENKQTNTFSDSSKAEEAAQIIQHFMEEFHTDLLTVTQALLKNSGEVEATSYYLHAGQRLDGYPVWSREDDLELQKDDEDVRSKLIAKFGAENVARRVAFRKS.

Positions 63-86 (AVSTDYVVACVESQRRLPLDLYRH) constitute a BRCT domain. One can recognise a Myb-like domain in the interval 94-153 (ASPRGRLPFTEAEDAALLRAVRERSGAPRVSGTALWKELECTGLTRHSWQAMRDRYLRHL). A disordered region spans residues 179–206 (EFESSESGSDTSDTPDELPLQNGEGTFP). The Nuclear localization signal motif lies at 313-329 (AKFGAENVARRVAFRKS).

Belongs to the RAP1 family. In terms of assembly, homodimer. Component of the shelterin complex (telosome). Interacts with terf2; the interaction is direct.

It is found in the nucleus. The protein resides in the chromosome. Its subcellular location is the telomere. In terms of biological role, acts both as a regulator of telomere function and as a transcription regulator. Involved in the regulation of telomere length and protection as a component of the shelterin complex (telosome). Does not bind DNA directly: recruited to telomeric double-stranded 5'-TTAGGG-3' repeats via its interaction with terf2. Independently of its function in telomeres, also acts as a transcription regulator: recruited to extratelomeric 5'-TTAGGG-3' sites via its association with terf2 or other factors, and regulates gene expression. The polypeptide is Telomeric repeat-binding factor 2-interacting protein 1 (TERF2IP) (Gallus gallus (Chicken)).